A 405-amino-acid chain; its full sequence is MKVLILNAGSSSQKSCLYEIPDDALLSEAPQPLWEGKVNWTQDRSVAEIEVKTARGETLHESIYGDSRQAHVTYMLYTLSRGATKVIGQLSEIDVVGHRVVHGGQNYRHSVIITEEVKQAIAKLSNLAPAHNPAALEGIEAIEKSLGDVPQVAVFDTGFHATLPDAAAIYPGPFEWVEQGIRRYGFHGISHQYCSARAAQILGRDLASLRIITCHLGNGCSLAAIKNGRSIDTTMGFTPLDGLMMGSRSGAIDPGIIVHLMRQSDYSAERLDYVLNKASGLRGISGVSSDLPQVIEAITQGNYRAQLAWDMYVHRLRSGIGSMLASLGGLDVLVFTAGVGEKSAGIRQAACEAFGFLGLKLDPEKNQNKPVDIDIATADSTVRVLVIHTQEDWAIAQQCWHLLKR.

Residue Asn-7 coordinates Mg(2+). Lys-14 serves as a coordination point for ATP. Arg-99 contacts substrate. Asp-156 serves as the catalytic Proton donor/acceptor. 215–219 (HLGNG) contributes to the ATP binding site. Residue Glu-391 coordinates Mg(2+).

The protein belongs to the acetokinase family. Homodimer. Mg(2+) serves as cofactor. Mn(2+) is required as a cofactor.

The protein resides in the cytoplasm. The enzyme catalyses acetate + ATP = acetyl phosphate + ADP. It participates in metabolic intermediate biosynthesis; acetyl-CoA biosynthesis; acetyl-CoA from acetate: step 1/2. In terms of biological role, catalyzes the formation of acetyl phosphate from acetate and ATP. Can also catalyze the reverse reaction. The chain is Acetate kinase from Nostoc sp. (strain PCC 7120 / SAG 25.82 / UTEX 2576).